The sequence spans 596 residues: Elongation factor 4 (596 aa).

Residues 2 to 184 (RNIRNFSIIA…AIVHRIPPPT (183 aa)) enclose the tr-type G domain. Residues 14 to 19 (DHGKST) and 131 to 134 (NKID) each bind GTP.

Belongs to the TRAFAC class translation factor GTPase superfamily. Classic translation factor GTPase family. LepA subfamily.

The protein localises to the cell inner membrane. It carries out the reaction GTP + H2O = GDP + phosphate + H(+). Its function is as follows. Required for accurate and efficient protein synthesis under certain stress conditions. May act as a fidelity factor of the translation reaction, by catalyzing a one-codon backward translocation of tRNAs on improperly translocated ribosomes. Back-translocation proceeds from a post-translocation (POST) complex to a pre-translocation (PRE) complex, thus giving elongation factor G a second chance to translocate the tRNAs correctly. Binds to ribosomes in a GTP-dependent manner. This chain is Elongation factor 4, found in Xanthomonas oryzae pv. oryzae (strain PXO99A).